We begin with the raw amino-acid sequence, 460 residues long: Argininosuccinate lyase (460 aa).

This sequence belongs to the lyase 1 family. Argininosuccinate lyase subfamily.

Its subcellular location is the cytoplasm. It catalyses the reaction 2-(N(omega)-L-arginino)succinate = fumarate + L-arginine. It participates in amino-acid biosynthesis; L-arginine biosynthesis; L-arginine from L-ornithine and carbamoyl phosphate: step 3/3. In Limosilactobacillus fermentum (strain NBRC 3956 / LMG 18251) (Lactobacillus fermentum), this protein is Argininosuccinate lyase.